The sequence spans 460 residues: Phosphomethylpyrimidine synthase (460 aa).

Substrate contacts are provided by residues asparagine 80, methionine 109, tyrosine 139, histidine 175, 195-197 (SRG), 236-239 (DSLR), and glutamate 275. Histidine 279 provides a ligand contact to Zn(2+). Position 302 (tyrosine 302) interacts with substrate. Residue histidine 343 participates in Zn(2+) binding. Residues cysteine 423, cysteine 426, and cysteine 431 each coordinate [4Fe-4S] cluster.

This sequence belongs to the ThiC family. The cofactor is [4Fe-4S] cluster.

The catalysed reaction is 5-amino-1-(5-phospho-beta-D-ribosyl)imidazole + S-adenosyl-L-methionine = 4-amino-2-methyl-5-(phosphooxymethyl)pyrimidine + CO + 5'-deoxyadenosine + formate + L-methionine + 3 H(+). It participates in cofactor biosynthesis; thiamine diphosphate biosynthesis. Catalyzes the synthesis of the hydroxymethylpyrimidine phosphate (HMP-P) moiety of thiamine from aminoimidazole ribotide (AIR) in a radical S-adenosyl-L-methionine (SAM)-dependent reaction. The protein is Phosphomethylpyrimidine synthase of Microcystis aeruginosa (strain NIES-843 / IAM M-2473).